A 149-amino-acid polypeptide reads, in one-letter code: Oligosaccharyltransferase complex subunit ostc (149 aa).

The Cytoplasmic segment spans residues 1 to 32 (MESLYRVPFTVLECPNLKLKKPSWLHMPSAMT). The helical transmembrane segment at 33 to 53 (VYAMVVVSYFLITGGIIYDVI) threads the bilayer. The Extracellular segment spans residues 54 to 83 (VEPPSVGSMTDEHGHQRPVAFLAYRVNGQY). A helical transmembrane segment spans residues 84–104 (IMEGLASSFLFTMGGLGFIIL). Over 105-117 (DRSNAPNIPKLNR) the chain is Cytoplasmic. The helical transmembrane segment at 118 to 138 (FLLLFIGFVCVLLSFFMARVF) threads the bilayer. The Extracellular portion of the chain corresponds to 139-149 (MRMKLPGYLMG).

This sequence belongs to the OSTC family. Specific component of the STT3A-containing form of the oligosaccharyltransferase (OST) complex.

Its subcellular location is the membrane. The protein operates within protein modification; protein glycosylation. In terms of biological role, specific component of the STT3A-containing form of the oligosaccharyl transferase (OST) complex that catalyzes the initial transfer of a defined glycan (Glc(3)Man(9)GlcNAc(2) in eukaryotes) from the lipid carrier dolichol-pyrophosphate to an asparagine residue within an Asn-X-Ser/Thr consensus motif in nascent polypeptide chains, the first step in protein N-glycosylation. N-glycosylation occurs cotranslationally and the complex associates with the Sec61 complex at the channel-forming translocon complex that mediates protein translocation across the endoplasmic reticulum (ER). All subunits are required for a maximal enzyme activity. The protein is Oligosaccharyltransferase complex subunit ostc of Xenopus tropicalis (Western clawed frog).